Reading from the N-terminus, the 275-residue chain is Formamidopyrimidine-DNA glycosylase (275 aa).

The active-site Schiff-base intermediate with DNA is the proline 2. The active-site Proton donor is glutamate 3. The active-site Proton donor; for beta-elimination activity is the lysine 58. Residues histidine 91 and arginine 110 each contribute to the DNA site. An FPG-type zinc finger spans residues 238–272 (QVYGQTGKPCPRCGQAIVKLKVGGRGTHICPKCQK). Arginine 262 acts as the Proton donor; for delta-elimination activity in catalysis.

This sequence belongs to the FPG family. In terms of assembly, monomer. The cofactor is Zn(2+).

The catalysed reaction is Hydrolysis of DNA containing ring-opened 7-methylguanine residues, releasing 2,6-diamino-4-hydroxy-5-(N-methyl)formamidopyrimidine.. It carries out the reaction 2'-deoxyribonucleotide-(2'-deoxyribose 5'-phosphate)-2'-deoxyribonucleotide-DNA = a 3'-end 2'-deoxyribonucleotide-(2,3-dehydro-2,3-deoxyribose 5'-phosphate)-DNA + a 5'-end 5'-phospho-2'-deoxyribonucleoside-DNA + H(+). Functionally, involved in base excision repair of DNA damaged by oxidation or by mutagenic agents. Acts as a DNA glycosylase that recognizes and removes damaged bases. Has a preference for oxidized purines, such as 7,8-dihydro-8-oxoguanine (8-oxoG). Has AP (apurinic/apyrimidinic) lyase activity and introduces nicks in the DNA strand. Cleaves the DNA backbone by beta-delta elimination to generate a single-strand break at the site of the removed base with both 3'- and 5'-phosphates. This Streptococcus pyogenes serotype M18 (strain MGAS8232) protein is Formamidopyrimidine-DNA glycosylase.